Reading from the N-terminus, the 233-residue chain is MSVISMKQLLEAGVHFGHQTRRWNPKMKRYIFTERNGIYIIDLQKTVKKVEEAYRTMRDIAAEGGDILFVGTKKQAQEAIKEEATRAGMYFVNQRWLGGTLTNFQTIQKRIKRLKDIERMQEDGTFEVLPKKEVVQLKKELERLEKFLGGIKDMKGLPSALFIVDPRKERIAVAEARKLHIPIIGIVDTNCDPDEIDHVIPANDDAIRAVKLLTSKMADAILETKQGEETVTA.

Belongs to the universal ribosomal protein uS2 family.

This chain is Small ribosomal subunit protein uS2, found in Bacillus mycoides (strain KBAB4) (Bacillus weihenstephanensis).